We begin with the raw amino-acid sequence, 747 residues long: H(+)/Cl(-) exchange transporter 4 (747 aa).

Residues 1–50 (MDFLEEPFPDVGTYEDFHTIDWLREKSRDTDRHRKITSKSKESIWEFIKS) are required for localization in the endoplasmic reticulum. At 1–54 (MDFLEEPFPDVGTYEDFHTIDWLREKSRDTDRHRKITSKSKESIWEFIKSLLDA) the chain is on the cytoplasmic side. The next 2 helical transmembrane spans lie at 55-92 (WSGWVVMLLIGLLAGTLAGVIDLAVDWMTDLKEGVCLS) and 138-161 (LNYLMYILWALLFAFLAVSLVRVF). Residues 167–171 (GSGIP) carry the Selectivity filter part_1 motif. A chloride-binding site is contributed by Ser168. The helical intramembrane region spans 170–177 (IPEIKTIL). The next 2 membrane-spanning stretches (helical) occupy residues 187–205 (GKWTLLIKTVTLVLVVSSG) and 211–230 (EGPLVHVACCCGNFFSSLFS). A Selectivity filter part_2 motif is present at residues 209-213 (GKEGP). 2 intramembrane regions (helical) span residues 242–254 (VLSAAAAAGVSVA) and 258–266 (PIGGVLFSL). 5 helical membrane-spanning segments follow: residues 278 to 296 (LWRSFFAALVAAFTLRSIN), 320 to 345 (FPFILLGVFGGLWGTLFTRCNIAWCR), 352 to 372 (LGRYPVLEVIAVTAVTAIVAY), 429 to 449 (MWQLALALIFKIVITIFTFGM), and 454 to 473 (GLFIPSMAVGAMAGRMVGIG). The short motif at 454–458 (GLFIP) is the Selectivity filter part_3 element. Phe456 contacts chloride. 2 intramembrane regions (helical) span residues 501-515 (GLYAMVGAAACLGGV) and 519-530 (TVSLVVIMFELT). Residues 531–534 (GGLE) constitute an intramembrane region (note=Loop between two helices). The helical transmembrane segment at 535-553 (YIVPLMAAAVTSKWVADAF) threads the bilayer. The Cytoplasmic segment spans residues 554–747 (GKEGIYEAHI…NQDPESIMFN (194 aa)). Tyr559 is a chloride binding site. 2 CBS domains span residues 587-653 (MRPR…QRQE) and 680-742 (LRRI…QDPE). Residues Ser597 and 618 to 620 (YNG) each bind ATP. Residues 654 to 683 (GIVSNSIMYFTEEPPELPANSPHPLKLRRI) are required for localization in the endoplasmic reticulum. 725–728 (TKKD) is a binding site for ATP.

This sequence belongs to the chloride channel (TC 2.A.49) family. ClC-4/CLCN4 subfamily. In terms of tissue distribution, predominantly present in excitable tissues such as nervous system and skeletal muscle. Not detected in heart.

The protein localises to the early endosome membrane. It is found in the late endosome membrane. It localises to the endoplasmic reticulum membrane. Its subcellular location is the lysosome membrane. The protein resides in the recycling endosome membrane. Its function is as follows. Strongly outwardly rectifying, electrogenic H(+)/Cl(-)exchanger which mediates the exchange of chloride ions against protons. The CLC channel family contains both chloride channels and proton-coupled anion transporters that exchange chloride or another anion for protons. The presence of conserved gating glutamate residues is typical for family members that function as antiporters. In Mus musculus (Mouse), this protein is H(+)/Cl(-) exchange transporter 4 (Clcn4).